A 65-amino-acid polypeptide reads, in one-letter code: MPKLKTSKAAAKRFKVTGTGKLKRMKAGKQHILTKKSQKTKRNLRKATMMDPSNEKNMKKILPYL.

Positions 23-44 (KRMKAGKQHILTKKSQKTKRNL) are disordered.

The protein belongs to the bacterial ribosomal protein bL35 family.

In Lachnoclostridium phytofermentans (strain ATCC 700394 / DSM 18823 / ISDg) (Clostridium phytofermentans), this protein is Large ribosomal subunit protein bL35.